The chain runs to 170 residues: Ribosome-binding factor A (170 aa).

The tract at residues 123-170 is disordered; that stretch reads AKAGVYAGDEDPYVKPRVIGEDEDDDDEEGDEDGDDVDRSAPGYEPAH. Over residues 143 to 158 the composition is skewed to acidic residues; it reads EDEDDDDEEGDEDGDD.

Belongs to the RbfA family. Monomer. Binds 30S ribosomal subunits, but not 50S ribosomal subunits or 70S ribosomes.

The protein localises to the cytoplasm. Functionally, one of several proteins that assist in the late maturation steps of the functional core of the 30S ribosomal subunit. Associates with free 30S ribosomal subunits (but not with 30S subunits that are part of 70S ribosomes or polysomes). Required for efficient processing of 16S rRNA. May interact with the 5'-terminal helix region of 16S rRNA. In Clavibacter sepedonicus (Clavibacter michiganensis subsp. sepedonicus), this protein is Ribosome-binding factor A.